Consider the following 712-residue polypeptide: Elongation factor G (712 aa).

The 283-residue stretch at 8–290 (TRYRNIGISA…AVIEFLPSPT (283 aa)) folds into the tr-type G domain. Residues 17–24 (AHIDAGKT), 88–92 (DTPGH), and 142–145 (NKMD) contribute to the GTP site.

Belongs to the TRAFAC class translation factor GTPase superfamily. Classic translation factor GTPase family. EF-G/EF-2 subfamily.

The protein localises to the cytoplasm. Its function is as follows. Catalyzes the GTP-dependent ribosomal translocation step during translation elongation. During this step, the ribosome changes from the pre-translocational (PRE) to the post-translocational (POST) state as the newly formed A-site-bound peptidyl-tRNA and P-site-bound deacylated tRNA move to the P and E sites, respectively. Catalyzes the coordinated movement of the two tRNA molecules, the mRNA and conformational changes in the ribosome. The sequence is that of Elongation factor G from Acinetobacter baumannii (strain AB0057).